A 118-amino-acid polypeptide reads, in one-letter code: Fluoride-specific ion channel FluC 2 (118 aa).

4 helical membrane-spanning segments follow: residues 1–21 (MMEA…RFAI), 33–53 (FPIA…YIIG), 55–75 (GVTT…FTTF), and 93–113 (ILFL…FLGM). Na(+)-binding residues include G70 and T73.

The protein belongs to the fluoride channel Fluc/FEX (TC 1.A.43) family.

It localises to the cell membrane. It carries out the reaction fluoride(in) = fluoride(out). Na(+) is not transported, but it plays an essential structural role and its presence is essential for fluoride channel function. Its function is as follows. Fluoride-specific ion channel. Important for reducing fluoride concentration in the cell, thus reducing its toxicity. This Bacillus cereus (strain ATCC 10987 / NRS 248) protein is Fluoride-specific ion channel FluC 2.